A 390-amino-acid polypeptide reads, in one-letter code: GTPase Obg (390 aa).

Residues 1 to 159 (MKFVDEASIL…RELLLELMLL (159 aa)) form the Obg domain. The segment at 127 to 147 (NTRFKSSVNRTPRQKTNGTPG) is disordered. Positions 129–145 (RFKSSVNRTPRQKTNGT) are enriched in polar residues. The OBG-type G domain maps to 160–333 (ADVGMLGMPN…LCWDVMTFII (174 aa)). Residues 166–173 (GMPNAGKS), 191–195 (FTTLV), 213–216 (DIPG), 283–286 (NKID), and 314–316 (SAA) each bind GTP. Residues Ser173 and Thr193 each contribute to the Mg(2+) site.

It belongs to the TRAFAC class OBG-HflX-like GTPase superfamily. OBG GTPase family. In terms of assembly, monomer. Mg(2+) serves as cofactor.

Its subcellular location is the cytoplasm. In terms of biological role, an essential GTPase which binds GTP, GDP and possibly (p)ppGpp with moderate affinity, with high nucleotide exchange rates and a fairly low GTP hydrolysis rate. Plays a role in control of the cell cycle, stress response, ribosome biogenesis and in those bacteria that undergo differentiation, in morphogenesis control. This is GTPase Obg from Shigella dysenteriae serotype 1 (strain Sd197).